The primary structure comprises 600 residues: Elongation factor 4 (600 aa).

The tr-type G domain maps to 4 to 186 (DTIRNFSIIA…EIVKKIPPPE (183 aa)). GTP-binding positions include 16 to 21 (DHGKST) and 133 to 136 (NKID).

The protein belongs to the TRAFAC class translation factor GTPase superfamily. Classic translation factor GTPase family. LepA subfamily.

The protein resides in the cell inner membrane. It catalyses the reaction GTP + H2O = GDP + phosphate + H(+). In terms of biological role, required for accurate and efficient protein synthesis under certain stress conditions. May act as a fidelity factor of the translation reaction, by catalyzing a one-codon backward translocation of tRNAs on improperly translocated ribosomes. Back-translocation proceeds from a post-translocation (POST) complex to a pre-translocation (PRE) complex, thus giving elongation factor G a second chance to translocate the tRNAs correctly. Binds to ribosomes in a GTP-dependent manner. The chain is Elongation factor 4 from Geobacter sulfurreducens (strain ATCC 51573 / DSM 12127 / PCA).